Consider the following 311-residue polypeptide: MSENQQINQKQQYNLNKLQKRLRRNVGEAIADFNMIEEGDRIMVCLSGGKDSFTMLEILRNLQQSAPVNFSLVAVNLDQKQPGFPEHVLPQYLDSIGVEYKIVEENTYGIVKDKIPEGKTTCSLCSRLRRGILYRTATELGATKIALGHHRDDILQTLFLNMFYGGKLKGMPPKLMSDDGKHVVIRPLAYCREKDIERFAEARQYPIIPCNLCGSQPNLQRQVIKDMLRDWDKRYPGRIETMFSAMQNVVPSHLADHALFDFKGIRHGSDVVDGGDLAFDREELPLQPVGWQPEDDEEAPSLTRLDVLEIK.

The PP-loop motif motif lies at Ser-47–Ser-52. [4Fe-4S] cluster-binding residues include Cys-122, Cys-125, and Cys-213.

This sequence belongs to the TtcA family. In terms of assembly, homodimer. Mg(2+) serves as cofactor. The cofactor is [4Fe-4S] cluster.

Its subcellular location is the cytoplasm. It carries out the reaction cytidine(32) in tRNA + S-sulfanyl-L-cysteinyl-[cysteine desulfurase] + AH2 + ATP = 2-thiocytidine(32) in tRNA + L-cysteinyl-[cysteine desulfurase] + A + AMP + diphosphate + H(+). It participates in tRNA modification. In terms of biological role, catalyzes the ATP-dependent 2-thiolation of cytidine in position 32 of tRNA, to form 2-thiocytidine (s(2)C32). The sulfur atoms are provided by the cysteine/cysteine desulfurase (IscS) system. This chain is tRNA-cytidine(32) 2-sulfurtransferase, found in Pectobacterium carotovorum subsp. carotovorum (strain PC1).